Here is a 121-residue protein sequence, read N- to C-terminus: Basic phospholipase A2 F17 (121 aa).

7 disulfides stabilise this stretch: cysteine 25–cysteine 114, cysteine 27–cysteine 43, cysteine 42–cysteine 94, cysteine 48–cysteine 121, cysteine 49–cysteine 87, cysteine 56–cysteine 80, and cysteine 74–cysteine 85. Ca(2+)-binding residues include tyrosine 26, glycine 28, and glycine 30. Histidine 46 is an active-site residue. Aspartate 47 contacts Ca(2+). The active site involves aspartate 88.

This sequence belongs to the phospholipase A2 family. Group II subfamily. D49 sub-subfamily. When this protein is associated with crotapotin (F5 or F7), it forms the crotoxin protein. It depends on Ca(2+) as a cofactor. Expressed by the venom gland.

It is found in the secreted. It catalyses the reaction a 1,2-diacyl-sn-glycero-3-phosphocholine + H2O = a 1-acyl-sn-glycero-3-phosphocholine + a fatty acid + H(+). Activated by heparin. Inhibited by its chaperone crotapotin. In terms of biological role, snake venom phospholipase A2 (PLA2) that has anticoagulant activity and inhibits bactericial growth of the Gram-negative bacteria Xanthomonas axonopodis pv. passiflorae (in monomeric form). PLA2 catalyzes the calcium-dependent hydrolysis of the 2-acyl groups in 3-sn-phosphoglycerides. The chain is Basic phospholipase A2 F17 from Crotalus durissus terrificus (South American rattlesnake).